The chain runs to 997 residues: Glutamate [NMDA] receptor subunit 1 (997 aa).

The signal sequence occupies residues 1-26 (MAMAEFVFCRPLFGLAIVLLVAPIDA). Over 27–573 (AQRHTASDNP…TLVSFLQPFS (547 aa)) the chain is Extracellular. Asparagine 258, asparagine 314, asparagine 345, asparagine 397, asparagine 454, asparagine 481, and asparagine 501 each carry an N-linked (GlcNAc...) asparagine glycan. Glycine contacts are provided by residues 530-532 (PLT) and arginine 537. The helical transmembrane segment at 574–594 (NTLWILVMVSVHVVALVLYLL) threads the bilayer. Topologically, residues 595 to 651 (DRFSPFGRFKLSHSDSNEEKALNLSSAVWFAWGVLLNSGIGEGTPRSFSARVLGMVW) are cytoplasmic. The chain crosses the membrane as a helical span at residues 652–672 (AGFAMIIVASYTANLAAFLVL). At 673–831 (ERPKTKLSGI…KTPNTLGLKN (159 aa)) the chain is on the extracellular side. N-linked (GlcNAc...) asparagine glycosylation is present at asparagine 693. Residues serine 703 and aspartate 747 each coordinate glycine. The helical transmembrane segment at 832-852 (MAGVFILVGVGIAGGVGLIII) threads the bilayer. Residues 853-997 (EVIYKKHQVK…YTSDVSHLVV (145 aa)) lie on the Cytoplasmic side of the membrane. Positions 970-997 (LGKTRPQQSVLPPRYSPGYTSDVSHLVV) are disordered. Residues 987–997 (GYTSDVSHLVV) are compositionally biased toward polar residues.

Belongs to the glutamate-gated ion channel (TC 1.A.10.1) family. As to quaternary structure, forms a heteromeric NMDA channel with Nmdar2. In terms of tissue distribution, highly expressed in adult heads: in the brain and ring gland. Low expression throughout the entire brain is also seen. Higher expression levels were observed in some scattered cell bodies and part of their fibers, including those from several pairs of DPM (dorsal-posterior-medial) neurons surrounding the calyx, DAL (dorsal-anterior-lateral) and DPL (dorsal-posterior-lateral) neurons in the lateral protocerebrum (LP), VAL (ventral-anterior-lateral) neurons in the anterior protocerebrum, and two pairs of VP (ventral-posterior) neurons in the posterior protocerebrum. Many cell bodies in the optic lobes show preferential expression. Punctuate expression is notably detected in many brain regions including the superior medial protocerebrum. Weakly expressed in the antennal lobes and central complex.

Its subcellular location is the cell membrane. The protein localises to the postsynaptic cell membrane. It is found in the postsynaptic density. Its function is as follows. NMDA receptor subtype of glutamate-gated ion channels with high calcium permeability and voltage-dependent sensitivity to magnesium. Mediated by glycine. This protein plays a key role in synaptic plasticity, synaptogenesis, excitotoxicity, memory acquisition and learning. It mediates neuronal functions in glutamate neurotransmission. Is involved in the cell surface targeting of NMDA receptors. Plays a role in associative learning and in long-term memory consolidation. The chain is Glutamate [NMDA] receptor subunit 1 from Drosophila melanogaster (Fruit fly).